The chain runs to 591 residues: Complement component C8 beta chain (591 aa).

Positions 1–32 are cleaved as a signal peptide; that stretch reads MKNSRTWAWRAPVELFLLCAALGCLSLPGSRG. Residues 33-54 constitute a propeptide that is removed on maturation; that stretch reads ERPHSFGSNAVNKSFAKSRQMR. Positions 64 to 117 constitute a TSP type-1 1 domain; that stretch reads DCELSSWSSWTTCDPCQKKRYRYAYLLQPSQFHGEPCNFSDKEVEDCVTNRPCG. 7 disulfides stabilise this stretch: Cys-65–Cys-100, Cys-76–Cys-110, Cys-79–Cys-116, Cys-122–Cys-133, Cys-127–Cys-146, Cys-140–Cys-155, and Cys-162–Cys-200. Residues Trp-70 and Trp-73 are each glycosylated (C-linked (Man) tryptophan). An N-linked (GlcNAc...) asparagine glycan is attached at Asn-101. An LDL-receptor class A domain is found at 120–157; the sequence is VRCEGFVCAQTGRCVNRRLLCNGDNDCGDQSDEANCRR. Residues Leu-138, Asn-141, Asp-143, Asp-145, Asp-151, and Glu-152 each coordinate Ca(2+). The region spanning 158–504 is the MACPF domain; the sequence is IYKKCQHEMD…EFQKEVSSCH (347 aa). Asn-243 is a glycosylation site (N-linked (GlcNAc...) asparagine). The next 4 beta stranded transmembrane spans lie at 252-259, 262-269, 379-386, and 392-399; these read SGFSFGFK, GIFELGIS, AKNDFKIG, and VYVSLGVS. The cysteines at positions 378 and 403 are disulfide-linked. Thr-418 is subject to Phosphothreonine. 4 cysteine pairs are disulfide-bonded: Cys-503–Cys-550, Cys-505–Cys-521, Cys-508–Cys-523, and Cys-525–Cys-534. The region spanning 505-535 is the EGF-like domain; the sequence is CAPCQGNGVPVLKGSRCDCICPVGSQGLACE. A TSP type-1 2 domain is found at 545-591; it reads DGKWNCWSNWSSCSGRRKTRQRQCNNPPPQNGGSPCSGPASETLDCS. Trp-551 and Trp-554 each carry a C-linked (Man) tryptophan glycan. Cys-557 and Cys-590 are disulfide-bonded. Positions 568–591 are disordered; that stretch reads CNNPPPQNGGSPCSGPASETLDCS.

The protein belongs to the complement C6/C7/C8/C9 family. As to quaternary structure, heterotrimer of 3 chains: alpha (C8A), beta (C8B) and gamma (C8G); the alpha and gamma chains are disulfide bonded. Component of the membrane attack complex (MAC), composed of complement C5b, C6, C7, C8A, C8B, C8G and multiple copies of the pore-forming subunit C9. N-glycosylated; contains one or two bound glycans. Not O-glycosylated.

It is found in the secreted. It localises to the target cell membrane. With respect to regulation, membrane attack complex (MAC) assembly is inhibited by CD59, thereby protecting self-cells from damage during complement activation. CD59 acts by binding to the beta-haipins of C8 (C8A and C8B), forming an intermolecular beta-sheet that prevents incorporation of the multiple copies of C9 required for complete formation of the osmolytic pore. MAC assembly is also inhibited by clusterin (CLU) chaperones that inhibit polymerization of C9. Functionally, component of the membrane attack complex (MAC), a multiprotein complex activated by the complement cascade, which inserts into a target cell membrane and forms a pore, leading to target cell membrane rupture and cell lysis. The MAC is initiated by proteolytic cleavage of C5 into complement C5b in response to the classical, alternative, lectin and GZMK complement pathways. The complement pathways consist in a cascade of proteins that leads to phagocytosis and breakdown of pathogens and signaling that strengthens the adaptive immune system. C8B, together with C8A and C8G, inserts into the target membrane, but does not form pores by itself. During MAC assembly, associates with C5b, C6 and C7 to form the C5b8 intermediate complex that inserts into the target membrane and traverses the bilayer increasing membrane rigidity. This Homo sapiens (Human) protein is Complement component C8 beta chain.